The primary structure comprises 137 residues: Large ribosomal subunit protein uL16 (137 aa).

This sequence belongs to the universal ribosomal protein uL16 family. Part of the 50S ribosomal subunit.

Its function is as follows. Binds 23S rRNA and is also seen to make contacts with the A and possibly P site tRNAs. In Wolbachia sp. subsp. Brugia malayi (strain TRS), this protein is Large ribosomal subunit protein uL16.